We begin with the raw amino-acid sequence, 282 residues long: Probable metal transport system membrane protein TM_0125 (282 aa).

A run of 9 helical transmembrane segments spans residues 33-53, 58-78, 79-99, 109-129, 148-168, 184-204, 210-230, 234-254, and 259-279; these read AFVG…IVVF, FIGD…TLIG, ADHR…VSLF, AIGI…SVSG, STDV…TVVF, FYGI…AITV, VVGV…SKIF, FWSL…AGFL, and LDLP…LPML.

It belongs to the ABC-3 integral membrane protein family.

Its subcellular location is the cell inner membrane. Its function is as follows. Part of an ATP-driven transport system TM_0123/TM_0124/TM_0125 for a metal. The chain is Probable metal transport system membrane protein TM_0125 from Thermotoga maritima (strain ATCC 43589 / DSM 3109 / JCM 10099 / NBRC 100826 / MSB8).